The primary structure comprises 100 residues: NAD(P)H-quinone oxidoreductase subunit 4L, chloroplastic (100 aa).

3 helical membrane-spanning segments follow: residues 1 to 21 (MIENALILGAYLFCIGFYGLI), 29 to 49 (ALMCLELIFNAVNINFVTFSN), and 63 to 83 (ISVIAIAAAEAAIGLSIILII).

The protein belongs to the complex I subunit 4L family. NDH is composed of at least 16 different subunits, 5 of which are encoded in the nucleus.

The protein resides in the plastid. The protein localises to the chloroplast thylakoid membrane. It catalyses the reaction a plastoquinone + NADH + (n+1) H(+)(in) = a plastoquinol + NAD(+) + n H(+)(out). It carries out the reaction a plastoquinone + NADPH + (n+1) H(+)(in) = a plastoquinol + NADP(+) + n H(+)(out). Its function is as follows. NDH shuttles electrons from NAD(P)H:plastoquinone, via FMN and iron-sulfur (Fe-S) centers, to quinones in the photosynthetic chain and possibly in a chloroplast respiratory chain. The immediate electron acceptor for the enzyme in this species is believed to be plastoquinone. Couples the redox reaction to proton translocation, and thus conserves the redox energy in a proton gradient. The sequence is that of NAD(P)H-quinone oxidoreductase subunit 4L, chloroplastic from Angiopteris evecta (Mule's foot fern).